The following is a 328-amino-acid chain: Malate dehydrogenase 1 (328 aa).

Position 12-18 (12-18 (GAAGQIA)) interacts with NAD(+). Substrate-binding residues include Arg93 and Arg99. NAD(+) is bound by residues Asn106, Gln113, and 130–132 (VGN). Substrate contacts are provided by Asn132 and Arg163. His188 serves as the catalytic Proton acceptor.

It belongs to the LDH/MDH superfamily. MDH type 2 family.

The catalysed reaction is (S)-malate + NAD(+) = oxaloacetate + NADH + H(+). In terms of biological role, catalyzes the reversible oxidation of malate to oxaloacetate. In Burkholderia vietnamiensis (strain G4 / LMG 22486) (Burkholderia cepacia (strain R1808)), this protein is Malate dehydrogenase 1.